The following is a 296-amino-acid chain: MKAYFIAILTLFTCIATVVRAQQMSELENRIDSLLNGKKATVGIAVWTDKGDMLRYNDHVHFPLLSVFKFHVALAVLDKMDKQSISLDSIVSIKASQMPPNTYSPLRKKFPDQDFTITLRELMQYSISQSDNNACDILIEYAGGIKHINDYIHRLSIDSFNLSETEDGMHSSFEAVYRNWSTPSAMVRLLRTADEKELFSNKELKDFLWQTMIDTETGANKLKGMLPAKTVVGHKTGSSDRNADGMKTADNDAGLVILPDGRKYYIAAFVMDSYETDEDNANIIARISRMVYDAMR.

The signal sequence occupies residues 1-21 (MKAYFIAILTLFTCIATVVRA). Catalysis depends on Ser66, which acts as the Acyl-ester intermediate. 235–237 (KTG) serves as a coordination point for substrate.

Belongs to the class-A beta-lactamase family.

The catalysed reaction is a beta-lactam + H2O = a substituted beta-amino acid. The chain is Beta-lactamase (cblA) from Bacteroides uniformis.